The following is a 230-amino-acid chain: 3-isopropylmalate dehydratase small subunit (230 aa).

The protein belongs to the LeuD family. LeuD type 1 subfamily. As to quaternary structure, heterodimer of LeuC and LeuD.

It carries out the reaction (2R,3S)-3-isopropylmalate = (2S)-2-isopropylmalate. It participates in amino-acid biosynthesis; L-leucine biosynthesis; L-leucine from 3-methyl-2-oxobutanoate: step 2/4. Functionally, catalyzes the isomerization between 2-isopropylmalate and 3-isopropylmalate, via the formation of 2-isopropylmaleate. The sequence is that of 3-isopropylmalate dehydratase small subunit from Bifidobacterium longum (strain DJO10A).